The following is a 496-amino-acid chain: Solute carrier family 2, facilitated glucose transporter member 3 (496 aa).

Over 1–10 (MGTQKVTPAL) the chain is Cytoplasmic. Residues 11-32 (IFAITVATIGSFQFGYNTGVIN) form a helical membrane-spanning segment. The Extracellular portion of the chain corresponds to 33-64 (APEKIIKEFINKTLTDKGNAPPSEVLLTSLWS). Residue Asn43 is glycosylated (N-linked (GlcNAc...) asparagine). The chain crosses the membrane as a helical span at residues 65–85 (LSVAIFSVGGMIGSFSVGLFV). Over 86-90 (NRFGR) the chain is Cytoplasmic. Residues 91–111 (RNSMLIVNLLAVTGGCFMGLC) form a helical membrane-spanning segment. Residues 112–118 (KVAKSVE) lie on the Extracellular side of the membrane. Residues 119–142 (MLILGRLVIGLFCGLCTGFVPMYI) traverse the membrane as a helical segment. At 143-153 (GEISPTALRGA) the chain is on the cytoplasmic side. A helical transmembrane segment spans residues 154–174 (FGTLNQLGIVVGILVAQIFGL). D-glucose is bound at residue Gln159. The Extracellular segment spans residues 175–183 (EFILGSEEL). Residues 184-204 (WPLLLGFTILPAILQSAALPF) form a helical membrane-spanning segment. Topologically, residues 205 to 269 (CPESPRFLLI…LFRVSSYRQP (65 aa)) are cytoplasmic. Position 232 is a phosphothreonine (Thr232). Residues 270-290 (IIISIVLQLSQQLSGINAVFY) form a helical membrane-spanning segment. The segment at 277 to 279 (QLS) is important for selectivity against fructose. D-glucose-binding positions include 280 to 281 (QQ) and Asn286. The Extracellular segment spans residues 291 to 304 (YSTGIFKDAGVQEP). A helical transmembrane segment spans residues 305–325 (IYATIGAGVVNTIFTVVSLFL). Residue Asn315 coordinates D-glucose. Topologically, residues 326–331 (VERAGR) are cytoplasmic. A helical membrane pass occupies residues 332–352 (RTLHMIGLGGMAFCSTLMTVS). At 353–363 (LLLKDNYNGMS) the chain is on the extracellular side. A helical membrane pass occupies residues 364-389 (FVCIGAILVFVAFFEIGPGPIPWFIV). The D-glucose site is built by Glu378 and Trp386. Residues 390–399 (AELFSQGPRP) lie on the Cytoplasmic side of the membrane. The chain crosses the membrane as a helical span at residues 400 to 420 (AAMAVAGCSNWTSNFLVGLLF). Residues 421–429 (PSAAHYLGA) lie on the Extracellular side of the membrane. A helical membrane pass occupies residues 430-450 (YVFIIFTGFLITFLAFTFFKV). The Cytoplasmic segment spans residues 451–496 (PETRGRTFEDITRAFEGQAHGADRSGKDGVMEMNSIEPAKETTTNV). Phosphoserine occurs at positions 475 and 485. Phosphothreonine is present on Thr492.

It belongs to the major facilitator superfamily. Sugar transporter (TC 2.A.1.1) family. Glucose transporter subfamily. As to quaternary structure, interacts with SMIM43; the interaction may promote SLC2A3-mediated glucose transport to meet the energy needs of mesendoderm differentiation. Highly expressed in brain. Expressed in many tissues.

It localises to the cell membrane. It is found in the perikaryon. Its subcellular location is the cell projection. The enzyme catalyses D-glucose(out) = D-glucose(in). It carries out the reaction D-galactose(in) = D-galactose(out). Deoxyglucose transport is inhibited by D-glucose, D-galactose and maltose. Galactose transport is inhibited by D-glucose and maltose. Facilitative glucose transporter. Can also mediate the uptake of various other monosaccharides across the cell membrane. Mediates the uptake of glucose, 2-deoxyglucose, galactose, mannose, xylose and fucose, and probably also dehydroascorbate. Does not mediate fructose transport. Required for mesendoderm differentiation. The sequence is that of Solute carrier family 2, facilitated glucose transporter member 3 from Homo sapiens (Human).